The sequence spans 619 residues: DEAD-box ATP-dependent RNA helicase 35B (619 aa).

Low complexity-rich tracts occupy residues 1 to 10 and 49 to 58; these read MAAAAAAAAA and PPTTNAVAVA. Residues 1-72 are disordered; the sequence is MAAAAAAAAA…PPRSTSSPAV (72 aa). Positions 173-201 match the Q motif motif; it reads RSFGDLRLPEPILRALRGKGIEKPTPIQV. Positions 204–388 constitute a Helicase ATP-binding domain; the sequence is LPVALSGRDM…KSALVKPIIV (185 aa). An ATP-binding site is contributed by 217-224; it reads AFTGSGKT. Positions 336–339 match the DEAD box motif; sequence DEAD. The Helicase C-terminal domain maps to 399–559; that stretch reads DVIQEVEYVK…RLPPILADLD (161 aa). The segment at 576 to 593 adopts a CCHC-type zinc-finger fold; that stretch reads KGCAFCGGLGHRIEACPK.

Belongs to the DEAD box helicase family. DDX41 subfamily.

It carries out the reaction ATP + H2O = ADP + phosphate + H(+). The sequence is that of DEAD-box ATP-dependent RNA helicase 35B from Oryza sativa subsp. japonica (Rice).